We begin with the raw amino-acid sequence, 91 residues long: Large ribosomal subunit protein uL22 (91 aa).

The protein belongs to the universal ribosomal protein uL22 family. In terms of assembly, part of the 50S ribosomal subunit.

Its function is as follows. This protein binds specifically to 23S rRNA; its binding is stimulated by other ribosomal proteins, e.g. L4, L17, and L20. It is important during the early stages of 50S assembly. It makes multiple contacts with different domains of the 23S rRNA in the assembled 50S subunit and ribosome. The globular domain of the protein is located near the polypeptide exit tunnel on the outside of the subunit, while an extended beta-hairpin is found that lines the wall of the exit tunnel in the center of the 70S ribosome. In Pigeon pea witches'-broom phytoplasma, this protein is Large ribosomal subunit protein uL22 (rplV).